Consider the following 318-residue polypeptide: Ficolin-1-B (318 aa).

Positions 1 to 19 (MTRWVQTFLLLVAVIRSYA) are cleaved as a signal peptide. One can recognise a Collagen-like domain in the interval 42–99 (GCPGIPGVPGPQGPSGPAGAKGEKGFPGIPGKMGPTGLKGERGISGPKGQKGDKGDPG). Residues 100-318 (IPVVGMAQNC…VSEIKFRPQP (219 aa)) form the Fibrinogen C-terminal domain. Cysteines 109 and 137 form a disulfide. Residues Asn-205 and Asn-222 are each glycosylated (N-linked (GlcNAc...) asparagine). Asp-253 serves as a coordination point for Ca(2+). The N-linked (GlcNAc...) asparagine glycan is linked to Asn-254. Ca(2+) contacts are provided by Asp-255 and Ser-257. A disulfide bond links Cys-261 and Cys-274. An a carbohydrate-binding site is contributed by 273–275 (SCH). N-linked (GlcNAc...) asparagine glycosylation occurs at Asn-287.

It belongs to the ficolin lectin family. Homotrimer. May form higher-order oligomers. N-glycosylated. Expressed in peripheral blood leukocytes. Also detected at lower levels in spleen and lung.

The protein resides in the secreted. Functionally, may function in innate immunity through activation of the lectin complement pathway. Binds to GalNAc and GlcNAc carbohydrate moieties. The sequence is that of Ficolin-1-B from Xenopus laevis (African clawed frog).